The chain runs to 292 residues: Trimeric intracellular cation channel type B (292 aa).

Residues 1 to 16 (MEYPWDDLTLAFSRTS) lie on the Lumenal side of the membrane. Residues 17 to 34 (MFPFFDIAHYLVSVMALK) form a helical membrane-spanning segment. Residues 35-47 (QRPGAVAAAWNNP) are Cytoplasmic-facing. A helical transmembrane segment spans residues 48-69 (LASWLSAMLHCFGGGILSCMLL). Residues 70–82 (AESPLKFLTNHTN) lie on the Lumenal side of the membrane. A helical transmembrane segment spans residues 83-100 (ILLASSIWYIVFFCPRDL). The Cytoplasmic segment spans residues 101-103 (VSQ). The chain crosses the membrane as a helical span at residues 104 to 122 (GYSYQPIQFLAAGMKEVTR). A 1,2-diacyl-sn-glycero-3-phospho-(1D-myo-inositol-4,5-bisphosphate) contacts are provided by lysine 118 and arginine 122. Over 123–140 (TWKIVGGVSDANSYYRNA) the chain is Lumenal. The chain crosses the membrane as a helical span at residues 141-158 (WIVMIVVGWARGAGGAVV). At 159–178 (TACEQLLKGDWKPEGDEWLK) the chain is on the cytoplasmic side. The chain crosses the membrane as a helical span at residues 179–195 (MSFPCKITLLGSIMFTF). Residues 196 to 206 (QHTRHLAISKH) are Lumenal-facing. The helical transmembrane segment at 207-225 (DLMFLYTIFLVTIKVTMMM) threads the bilayer. Residues 226–292 (TKDTAVTLTP…GAKRHAKKED (67 aa)) lie on the Cytoplasmic side of the membrane. The disordered stretch occupies residues 248–292 (RQQQQFSSSEKKTEVKPSSNGSASSASKRGAEPSGGAKRHAKKED). The segment covering 265–274 (SSNGSASSAS) has biased composition (low complexity).

It belongs to the TMEM38 family. As to quaternary structure, homotrimer; conformation seems to be controled by binding to diacylglycerol (DAG). As to expression, widely expressed.

It is found in the endoplasmic reticulum membrane. It carries out the reaction K(+)(in) = K(+)(out). With respect to regulation, channel activity is activated by increased cytosolic Ca(2+) levels and blocked by luminal high Ca(2+) levels. Intracellular monovalent cation channel required for maintenance of rapid intracellular calcium release. Acts as a potassium counter-ion channel that functions in synchronization with calcium release from intracellular stores. Activated by increased cytosolic Ca(2+) levels. The polypeptide is Trimeric intracellular cation channel type B (Tmem38b) (Mus musculus (Mouse)).